A 179-amino-acid polypeptide reads, in one-letter code: MKKKRRLFIRTGILLVLICALGYTIYNAVFAGKESISEGSDAPNFVLEDTNGKRIELSDLKGKGVFLNFWGTWCEPCKKEFPYMANQYKHFKSQGVEIVAVNVGESKIAVHNFMKSYGVNFPVVLDTDRQVLDAYDVSPLPTTFLINPEGKVVKVVTGTMTESMIHDYMNLIKPGETSG.

The chain crosses the membrane as a helical; Signal-anchor for type II membrane protein span at residues 11–30 (TGILLVLICALGYTIYNAVF). Positions 36–174 (ISEGSDAPNF…IHDYMNLIKP (139 aa)) constitute a Thioredoxin domain. The cysteines at positions 74 and 77 are disulfide-linked.

The protein belongs to the thioredoxin family. ResA subfamily.

The protein localises to the cell membrane. It participates in protein modification; cytochrome c assembly. In terms of biological role, thiol-disulfide oxidoreductase which is required in disulfide reduction during c-type cytochrome synthesis. May accept reducing equivalents from CcdA, leading to breakage of disulfide bonds in apocytochrome c; following this reduction heme can be covalently attached. Does not play a role in sporulation. The chain is Thiol-disulfide oxidoreductase ResA (resA) from Bacillus subtilis (strain 168).